The chain runs to 419 residues: Transcription termination factor Rho (419 aa).

Positions 48–123 constitute a Rho RNA-BD domain; it reads DIFGDGVLEI…LKVNEVNYDK (76 aa). RNA-binding regions lie at residues 61-66, 78-80, and 108-110; these read GFGFLR, DIY, and ERY. Residues 169–174, 181–186, and Arg212 each bind ATP; these read GRGQRG and KAGKTI. The segment at 284–288 is RNA-binding 2; sequence VLTGG.

Belongs to the Rho family. As to quaternary structure, homohexamer. The homohexamer assembles into an open ring structure.

Functionally, facilitates transcription termination by a mechanism that involves Rho binding to the nascent RNA, activation of Rho's RNA-dependent ATPase activity, and release of the mRNA from the DNA template. This Buchnera aphidicola subsp. Acyrthosiphon pisum (strain APS) (Acyrthosiphon pisum symbiotic bacterium) protein is Transcription termination factor Rho.